The following is a 360-amino-acid chain: Histidinol-phosphate aminotransferase (360 aa).

At Lys-218 the chain carries N6-(pyridoxal phosphate)lysine.

Belongs to the class-II pyridoxal-phosphate-dependent aminotransferase family. Histidinol-phosphate aminotransferase subfamily. In terms of assembly, homodimer. It depends on pyridoxal 5'-phosphate as a cofactor.

It catalyses the reaction L-histidinol phosphate + 2-oxoglutarate = 3-(imidazol-4-yl)-2-oxopropyl phosphate + L-glutamate. It functions in the pathway amino-acid biosynthesis; L-histidine biosynthesis; L-histidine from 5-phospho-alpha-D-ribose 1-diphosphate: step 7/9. The sequence is that of Histidinol-phosphate aminotransferase from Chlorobium phaeobacteroides (strain DSM 266 / SMG 266 / 2430).